We begin with the raw amino-acid sequence, 757 residues long: MRFNQYSYINFPKENVLSELKKCGFDLQNTANHKDSLETFLRRFFFTYQDTNYPLSILAADKKTDLLTFFQSEDELTADIFYTVAFQLLGFSYLVDFEDSDVFRKETGFPIIYGDLIENLYQLLNTRTKKGNTLIDQLVSDGLIPEDNDYHYFNGKSLATFSNQDVIREVVYVESRVDTDQKGLSDLVKVSIIRPRFDGKIPAIMTASPYHQGTNDKASDKALYKMEGELEVKLPHKIELEKPQLNLVQPQGKAELIAEAEEKLTHINSSYTLNDYFLPRGFANLYVSGVGTKDSTGFMTNGDYQQIEAYKNVIDWLNGRCRAFTDHTRQRQVKADWSNGKVATTGLSYLGTMSNGLATTGVDGLEVIIAEAGISSWYNYYRENGLVTSPGGYPGEDFDSLAELTYSRNLLAGDYIRGNEAHQADLEKVKAQLDRKTGDYNQFWHDRNYLLNAHKVKAEVVFTHGSQDWNVKPLHVYQMFHALPTHINKHLFFHNGAHVYMNNWQSIDFRESINALLTKKLLGQETDFQLPTVIWQDNTAPQTWLSLDNFGGQENCETFSLGQEEQAIQNQYPDKDFERYGKTYQTFNTELYQGKANQITINLPVTKDLHLNGRAQLNLRIKSSTNKGLLSAQLLEFGQKKYLQPYPAILSARTIDNGRYHMLENLCELPFRPEAQRVVTKGYLNLQNRNDLLLVEDITADEWMDVQFELQPTIYKLKEGDTLRLVLYTTDFEITIRDNTDYHLTVDLAQSMLTLPC.

Catalysis depends on charge relay system residues Ser348, Asp468, and His498.

This sequence belongs to the peptidase S15 family. In terms of assembly, homodimer.

Its subcellular location is the cytoplasm. It catalyses the reaction Hydrolyzes Xaa-Pro-|- bonds to release unblocked, N-terminal dipeptides from substrates including Ala-Pro-|-p-nitroanilide and (sequentially) Tyr-Pro-|-Phe-Pro-|-Gly-Pro-|-Ile.. Removes N-terminal dipeptides sequentially from polypeptides having unsubstituted N-termini provided that the penultimate residue is proline. The polypeptide is Xaa-Pro dipeptidyl-peptidase (Streptococcus pneumoniae (strain ATCC BAA-255 / R6)).